The primary structure comprises 433 residues: ATP-dependent protease ATPase subunit HslU (433 aa).

Residues valine 18, 60-65 (GVGKTE), aspartate 246, glutamate 311, and arginine 383 each bind ATP.

It belongs to the ClpX chaperone family. HslU subfamily. In terms of assembly, a double ring-shaped homohexamer of HslV is capped on each side by a ring-shaped HslU homohexamer. The assembly of the HslU/HslV complex is dependent on binding of ATP.

The protein resides in the cytoplasm. Functionally, ATPase subunit of a proteasome-like degradation complex; this subunit has chaperone activity. The binding of ATP and its subsequent hydrolysis by HslU are essential for unfolding of protein substrates subsequently hydrolyzed by HslV. HslU recognizes the N-terminal part of its protein substrates and unfolds these before they are guided to HslV for hydrolysis. The chain is ATP-dependent protease ATPase subunit HslU from Nitrobacter hamburgensis (strain DSM 10229 / NCIMB 13809 / X14).